We begin with the raw amino-acid sequence, 126 residues long: Aspartate 1-decarboxylase (126 aa).

Catalysis depends on Ser-25, which acts as the Schiff-base intermediate with substrate; via pyruvic acid. Ser-25 is subject to Pyruvic acid (Ser). Thr-57 lines the substrate pocket. Residue Tyr-58 is the Proton donor of the active site. Position 73-75 (73-75) interacts with substrate; sequence GAA.

The protein belongs to the PanD family. Heterooctamer of four alpha and four beta subunits. The cofactor is pyruvate. Is synthesized initially as an inactive proenzyme, which is activated by self-cleavage at a specific serine bond to produce a beta-subunit with a hydroxyl group at its C-terminus and an alpha-subunit with a pyruvoyl group at its N-terminus.

The protein localises to the cytoplasm. The enzyme catalyses L-aspartate + H(+) = beta-alanine + CO2. It participates in cofactor biosynthesis; (R)-pantothenate biosynthesis; beta-alanine from L-aspartate: step 1/1. In terms of biological role, catalyzes the pyruvoyl-dependent decarboxylation of aspartate to produce beta-alanine. The polypeptide is Aspartate 1-decarboxylase (Azotobacter vinelandii (strain DJ / ATCC BAA-1303)).